The sequence spans 363 residues: 5-formaminoimidazole-4-carboxamide-1-(beta)-D-ribofuranosyl 5'-monophosphate synthetase (363 aa).

Residues His29 and Ser96 each coordinate 5-amino-1-(5-phospho-beta-D-ribosyl)imidazole-4-carboxamide. The ATP-grasp domain maps to 118-354; the sequence is RDILRWEAER…IALEIKNAIK (237 aa). Residues 148–210 and Glu232 contribute to the ATP site; that span reads PSEI…CNYC. Residue Asn260 participates in 5-amino-1-(5-phospho-beta-D-ribosyl)imidazole-4-carboxamide binding. Mg(2+) is bound by residues Gln299 and Glu312.

The protein belongs to the phosphohexose mutase family. Mg(2+) serves as cofactor. It depends on Mn(2+) as a cofactor.

It carries out the reaction 5-amino-1-(5-phospho-beta-D-ribosyl)imidazole-4-carboxamide + formate + ATP = 5-formamido-1-(5-phospho-D-ribosyl)imidazole-4-carboxamide + ADP + phosphate. Its pathway is purine metabolism; IMP biosynthesis via de novo pathway; 5-formamido-1-(5-phospho-D-ribosyl)imidazole-4-carboxamide from 5-amino-1-(5-phospho-D-ribosyl)imidazole-4-carboxamide (formate route): step 1/1. In terms of biological role, catalyzes the ATP- and formate-dependent formylation of 5-aminoimidazole-4-carboxamide-1-beta-d-ribofuranosyl 5'-monophosphate (AICAR) to 5-formaminoimidazole-4-carboxamide-1-beta-d-ribofuranosyl 5'-monophosphate (FAICAR) in the absence of folates. This chain is 5-formaminoimidazole-4-carboxamide-1-(beta)-D-ribofuranosyl 5'-monophosphate synthetase, found in Methanobrevibacter smithii (strain ATCC 35061 / DSM 861 / OCM 144 / PS).